The following is a 635-amino-acid chain: 1-deoxy-D-xylulose-5-phosphate synthase (635 aa).

Residues His77 and 118 to 120 contribute to the thiamine diphosphate site; that span reads GHA. Asp150 lines the Mg(2+) pocket. Thiamine diphosphate contacts are provided by residues 151–152, Asn179, Tyr290, and Glu372; that span reads AS. Residue Asn179 coordinates Mg(2+).

It belongs to the transketolase family. DXPS subfamily. In terms of assembly, homodimer. Requires Mg(2+) as cofactor. Thiamine diphosphate serves as cofactor.

The catalysed reaction is D-glyceraldehyde 3-phosphate + pyruvate + H(+) = 1-deoxy-D-xylulose 5-phosphate + CO2. The protein operates within metabolic intermediate biosynthesis; 1-deoxy-D-xylulose 5-phosphate biosynthesis; 1-deoxy-D-xylulose 5-phosphate from D-glyceraldehyde 3-phosphate and pyruvate: step 1/1. Its function is as follows. Catalyzes the acyloin condensation reaction between C atoms 2 and 3 of pyruvate and glyceraldehyde 3-phosphate to yield 1-deoxy-D-xylulose-5-phosphate (DXP). The protein is 1-deoxy-D-xylulose-5-phosphate synthase of Leptospira borgpetersenii serovar Hardjo-bovis (strain JB197).